Consider the following 158-residue polypeptide: Phosphopantetheine adenylyltransferase (158 aa).

Thr-10 contributes to the substrate binding site. ATP-binding positions include 10–11 (TF) and His-18. Substrate contacts are provided by Lys-42, Leu-74, and Arg-88. ATP contacts are provided by residues 89-91 (GIR), Glu-99, and 124-130 (WRYLSST).

Belongs to the bacterial CoaD family. In terms of assembly, homohexamer. Requires Mg(2+) as cofactor.

It localises to the cytoplasm. It carries out the reaction (R)-4'-phosphopantetheine + ATP + H(+) = 3'-dephospho-CoA + diphosphate. Its pathway is cofactor biosynthesis; coenzyme A biosynthesis; CoA from (R)-pantothenate: step 4/5. Its function is as follows. Reversibly transfers an adenylyl group from ATP to 4'-phosphopantetheine, yielding dephospho-CoA (dPCoA) and pyrophosphate. The protein is Phosphopantetheine adenylyltransferase of Actinobacillus pleuropneumoniae serotype 5b (strain L20).